We begin with the raw amino-acid sequence, 306 residues long: Methionyl-tRNA formyltransferase (306 aa).

108-111 (SLLP) serves as a coordination point for (6S)-5,6,7,8-tetrahydrofolate.

It belongs to the Fmt family.

The catalysed reaction is L-methionyl-tRNA(fMet) + (6R)-10-formyltetrahydrofolate = N-formyl-L-methionyl-tRNA(fMet) + (6S)-5,6,7,8-tetrahydrofolate + H(+). In terms of biological role, attaches a formyl group to the free amino group of methionyl-tRNA(fMet). The formyl group appears to play a dual role in the initiator identity of N-formylmethionyl-tRNA by promoting its recognition by IF2 and preventing the misappropriation of this tRNA by the elongation apparatus. This is Methionyl-tRNA formyltransferase from Arthrobacter sp. (strain FB24).